The sequence spans 104 residues: Complex III assembly factor LYRM7 (104 aa).

This sequence belongs to the complex I LYR family. Interacts with UQCRFS1.

Its subcellular location is the mitochondrion matrix. Functionally, assembly factor required for Rieske Fe-S protein UQCRFS1 incorporation into the cytochrome b-c1 (CIII) complex. Functions as a chaperone, binding to this subunit within the mitochondrial matrix and stabilizing it prior to its translocation and insertion into the late CIII dimeric intermediate within the mitochondrial inner membrane. This Danio rerio (Zebrafish) protein is Complex III assembly factor LYRM7 (LYRM7).